The following is a 254-amino-acid chain: MSVLSGLNTKVVKNGDPAPAPPASGTIRIYNMRYCPWAQRALIFASLKKIPTEVINIHLDQKPDWFFTKHYKGQVPALEHDEGKKIVIESAVIPEYLDDIYPEPRIIPTDHYEKVQQKLLLDRISGQLSSAFYGVVQAAKISDLLKEKLVELAKAYDTAEELLTGDFYSGTSKPGFVDYLIYPNIQRAFWTSHIIKDFPLKVESFPGPNYPKLSKWYKRLDSIPEVIATSQPTETAVEFFKSWIIGAPNFDYGL.

Residues 25–105 enclose the GST N-terminal domain; the sequence is GTIRIYNMRY…YLDDIYPEPR (81 aa). Cys35 (nucleophile) is an active-site residue. Residues Lys62, Val75, and 89–90 each bind glutathione; that span reads ES. The region spanning 110 to 239 is the GST C-terminal domain; it reads DHYEKVQQKL…SQPTETAVEF (130 aa).

It belongs to the GST superfamily. Omega family.

The catalysed reaction is RX + glutathione = an S-substituted glutathione + a halide anion + H(+). The enzyme catalyses L-dehydroascorbate + 2 glutathione = glutathione disulfide + L-ascorbate. It carries out the reaction methylarsonate + 2 glutathione + H(+) = methylarsonous acid + glutathione disulfide + H2O. Functionally, exhibits glutathione-dependent thiol transferase activity. Has dehydroascorbate reductase activity and may contribute to the recycling of ascorbic acid. Participates in the biotransformation of inorganic arsenic and reduces monomethylarsonic acid (MMA). This chain is Probable glutathione transferase omega-2 (gsto-2), found in Caenorhabditis elegans.